Here is a 105-residue protein sequence, read N- to C-terminus: dATP/dGTP diphosphohydrolase (105 aa).

Belongs to the Caudovirales dATP/dGTP diphosphohydrolase family. It depends on Co(2+) as a cofactor.

The enzyme catalyses dGTP + H2O = dGMP + diphosphate + H(+). It carries out the reaction dATP + H2O = dAMP + diphosphate + H(+). Its pathway is purine metabolism. Its function is as follows. Catalyzes the hydrolysis of dGTP into dGMP, which is needed among other for the first step of biosynthesis of dZTP (2-amino-2'-deoxyadenosine-5'-triphosphate). The sequence is that of dATP/dGTP diphosphohydrolase from Cyanophage S-2L (Cyanobacteria phage S-2L).